Consider the following 1931-residue polypeptide: Chitin synthase 5 (1931 aa).

The Myosin motor domain occupies 11 to 777; it reads LGVTDLSSLA…LFRFLEDRLR (767 aa). 122–129 contributes to the ATP binding site; that stretch reads GPTGSGKS. Residues asparagine 510, asparagine 538, and asparagine 676 are each glycosylated (N-linked (GlcNAc...) asparagine). Residues 655–677 form an actin-binding region; that stretch reads VDSLLKSFDQTQTWYIFALRPND. The interval 798-817 is disordered; that stretch reads DPFSPHRYQPTSFDSQDHVY. Residue asparagine 842 is glycosylated (N-linked (GlcNAc...) asparagine). 2 consecutive transmembrane segments (helical) span residues 912 to 932 and 951 to 971; these read WVWL…SKIA and MIIW…GPVI. Asparagine 1062, asparagine 1078, and asparagine 1146 each carry an N-linked (GlcNAc...) asparagine glycan. The helical transmembrane segment at 1220–1240 threads the bilayer; it reads ILLALSCVMVAVIGFKFLSAL. N-linked (GlcNAc...) asparagine glycosylation occurs at asparagine 1583. 3 helical membrane-spanning segments follow: residues 1615–1635, 1641–1661, and 1668–1688; these read LSTI…YLIV, IPTL…MIFI, and MIAW…LLPL. The disordered stretch occupies residues 1826–1847; sequence AHRPSLDDTSSFHQPYQPAPRP. The 56-residue stretch at 1875-1930 folds into the DEK-C domain; the sequence is AITDSQLERSIRKICANAELDKLTKKGVRKELEREYGVELTERREAINRLVEKVLT.

In the N-terminal section; belongs to the TRAFAC class CC myosin-kinesin ATPase superfamily. Myosin family. It in the C-terminal section; belongs to the chitin synthase family. Class V subfamily.

It localises to the cell membrane. It is found in the cell septum. The protein localises to the cell tip. The catalysed reaction is [(1-&gt;4)-N-acetyl-beta-D-glucosaminyl](n) + UDP-N-acetyl-alpha-D-glucosamine = [(1-&gt;4)-N-acetyl-beta-D-glucosaminyl](n+1) + UDP + H(+). Polymerizes chitin, a structural polymer of the cell wall and septum, by transferring the sugar moiety of UDP-GlcNAc to the non-reducing end of the growing chitin polymer. Produces a large proportion of the chitin that is not deacetylated to chitosan. In Cryptococcus neoformans var. grubii serotype A (strain H99 / ATCC 208821 / CBS 10515 / FGSC 9487) (Filobasidiella neoformans var. grubii), this protein is Chitin synthase 5.